Reading from the N-terminus, the 87-residue chain is HssA/B-like protein 31 (87 aa).

Belongs to the hssA/B family.

The protein is HssA/B-like protein 31 (hssl31) of Dictyostelium discoideum (Social amoeba).